A 464-amino-acid chain; its full sequence is ATP synthase subunit beta (464 aa).

Position 153–160 (G153–T160) interacts with ATP.

The protein belongs to the ATPase alpha/beta chains family. As to quaternary structure, F-type ATPases have 2 components, CF(1) - the catalytic core - and CF(0) - the membrane proton channel. CF(1) has five subunits: alpha(3), beta(3), gamma(1), delta(1), epsilon(1). CF(0) has three main subunits: a(1), b(2) and c(9-12). The alpha and beta chains form an alternating ring which encloses part of the gamma chain. CF(1) is attached to CF(0) by a central stalk formed by the gamma and epsilon chains, while a peripheral stalk is formed by the delta and b chains.

The protein localises to the cell inner membrane. The catalysed reaction is ATP + H2O + 4 H(+)(in) = ADP + phosphate + 5 H(+)(out). Its function is as follows. Produces ATP from ADP in the presence of a proton gradient across the membrane. The catalytic sites are hosted primarily by the beta subunits. The chain is ATP synthase subunit beta from Burkholderia ambifaria (strain ATCC BAA-244 / DSM 16087 / CCUG 44356 / LMG 19182 / AMMD) (Burkholderia cepacia (strain AMMD)).